An 879-amino-acid chain; its full sequence is Leucine--tRNA ligase (879 aa).

Residues 45-55 (PYPSGALHMGH) carry the 'HIGH' region motif. Residues 637 to 641 (KMSKS) carry the 'KMSKS' region motif. Lysine 640 contacts ATP.

It belongs to the class-I aminoacyl-tRNA synthetase family.

The protein resides in the cytoplasm. The enzyme catalyses tRNA(Leu) + L-leucine + ATP = L-leucyl-tRNA(Leu) + AMP + diphosphate. This is Leucine--tRNA ligase from Xylella fastidiosa (strain M23).